The sequence spans 745 residues: Targeting protein for Xklp2 (745 aa).

Residue Thr72 is modified to Phosphothreonine. A disordered region spans residues 84 to 217 (ETEKENLQKQ…VLKSTEEQEI (134 aa)). Polar residues-rich tracts occupy residues 91-101 (QKQSIPSNDCS) and 110-119 (SGNTPVQPQR). Ser121 and Ser125 each carry phosphoserine. 3 stretches are compositionally biased toward basic and acidic residues: residues 126-137 (AQKDLEQKEKNH), 182-192 (RKNERETLEKA), and 204-217 (AREK…EQEI). Position 128 is an N6-acetyllysine (Lys128). Ser294 bears the Phosphoserine mark. Lys307 is modified (N6-acetyllysine). Phosphoserine is present on Ser312. Thr340 is subject to Phosphothreonine. At Ser359 the chain carries Phosphoserine. Thr369 is subject to Phosphothreonine. At Lys375 the chain carries N6-acetyllysine. A Glycyl lysine isopeptide (Lys-Gly) (interchain with G-Cter in SUMO2) cross-link involves residue Lys477. The residue at position 486 (Ser486) is a Phosphoserine. Glycyl lysine isopeptide (Lys-Gly) (interchain with G-Cter in SUMO2) cross-links involve residues Lys500 and Lys640. At Ser737 the chain carries Phosphoserine. A Glycyl lysine isopeptide (Lys-Gly) (interchain with G-Cter in SUMO2) cross-link involves residue Lys739.

It belongs to the TPX2 family. Interacts with AURKA. Interacts with importin-alpha; leading to inactivate TPX2. Interacts with HNRNPU; this interaction recruits HNRNPU to spindle microtubules (MTs). Interacts with BCL2L10. Interacts with KIF11.

It is found in the nucleus. Its subcellular location is the cytoplasm. The protein resides in the cytoskeleton. The protein localises to the spindle. It localises to the spindle pole. Functionally, spindle assembly factor required for normal assembly of mitotic spindles. Required for normal assembly of microtubules during apoptosis. Required for chromatin and/or kinetochore dependent microtubule nucleation. Mediates AURKA localization to spindle microtubules. Activates AURKA by promoting its autophosphorylation at 'Thr-288' and protects this residue against dephosphorylation. TPX2 is inactivated upon binding to importin-alpha. At the onset of mitosis, GOLGA2 interacts with importin-alpha, liberating TPX2 from importin-alpha, allowing TPX2 to activate AURKA kinase and stimulate local microtubule nucleation. The protein is Targeting protein for Xklp2 (Tpx2) of Mus musculus (Mouse).